The primary structure comprises 255 residues: Protein patched homolog 2 (255 aa).

Topologically, residues 1-197 are extracellular; the sequence is SLLQGGSAYL…LNDIMKSFSD (197 aa). Asn-147 and Asn-175 each carry an N-linked (GlcNAc...) asparagine glycan. The helical transmembrane segment at 198-218 threads the bilayer; it reads VSVIRVAGGYLLMLAYACVTM. An SSD domain is found at 199–255; sequence SVIRVAGGYLLMLAYACVTMLRWDCTKSQGAVGLAGVLLVALSVASGLGLCSLLGIS. Over 219-227 the chain is Cytoplasmic; the sequence is LRWDCTKSQ. The helical transmembrane segment at 228-248 threads the bilayer; that stretch reads GAVGLAGVLLVALSVASGLGL. Residues 249 to 255 are Extracellular-facing; that stretch reads CSLLGIS.

It belongs to the patched family. As to expression, in the eye, detected in neural retina, iris, retinal pigment epithelium, but not in lens.

It localises to the membrane. May act as a receptor for sonic hedgehog (SHH). In Cynops pyrrhogaster (Japanese fire-bellied newt), this protein is Protein patched homolog 2 (PTC2).